The primary structure comprises 889 residues: Protein translocase subunit SecA (889 aa).

ATP is bound by residues glutamine 87, 105–109 (GEGKT), and aspartate 494. Residues 823 to 889 (ESLRPEEADL…RMDKDTKGKR (67 aa)) form a disordered region. Over residues 867 to 889 (PRDDRPMNREERRRMDKDTKGKR) the composition is skewed to basic and acidic residues.

Belongs to the SecA family. Monomer and homodimer. Part of the essential Sec protein translocation apparatus which comprises SecA, SecYEG and auxiliary proteins SecDF-YajC and YidC.

The protein localises to the cell inner membrane. The protein resides in the cytoplasm. The catalysed reaction is ATP + H2O + cellular proteinSide 1 = ADP + phosphate + cellular proteinSide 2.. Part of the Sec protein translocase complex. Interacts with the SecYEG preprotein conducting channel. Has a central role in coupling the hydrolysis of ATP to the transfer of proteins into and across the cell membrane, serving as an ATP-driven molecular motor driving the stepwise translocation of polypeptide chains across the membrane. The protein is Protein translocase subunit SecA of Bdellovibrio bacteriovorus (strain ATCC 15356 / DSM 50701 / NCIMB 9529 / HD100).